Here is a 364-residue protein sequence, read N- to C-terminus: 1-aminocyclopropane-1-carboxylate oxidase homolog 11 (364 aa).

In terms of domain architecture, Fe2OG dioxygenase spans 213–312 (KSLLMICHYY…RISVASFFSS (100 aa)). Residues His-237, Asp-239, and His-293 each contribute to the Fe cation site. Arg-303 provides a ligand contact to 2-oxoglutarate.

It belongs to the iron/ascorbate-dependent oxidoreductase family. Requires Fe(2+) as cofactor.

In Arabidopsis thaliana (Mouse-ear cress), this protein is 1-aminocyclopropane-1-carboxylate oxidase homolog 11.